A 311-amino-acid chain; its full sequence is Ribosomal RNA small subunit methyltransferase H (311 aa).

Residues 34 to 36, aspartate 54, phenylalanine 78, aspartate 100, and glutamine 107 contribute to the S-adenosyl-L-methionine site; that span reads GGH.

This sequence belongs to the methyltransferase superfamily. RsmH family.

Its subcellular location is the cytoplasm. It carries out the reaction cytidine(1402) in 16S rRNA + S-adenosyl-L-methionine = N(4)-methylcytidine(1402) in 16S rRNA + S-adenosyl-L-homocysteine + H(+). Its function is as follows. Specifically methylates the N4 position of cytidine in position 1402 (C1402) of 16S rRNA. The sequence is that of Ribosomal RNA small subunit methyltransferase H from Hamiltonella defensa subsp. Acyrthosiphon pisum (strain 5AT).